A 287-amino-acid chain; its full sequence is Acetylglutamate kinase (287 aa).

Substrate-binding positions include 70–71 (GG), Arg-92, and Asn-184.

The protein belongs to the acetylglutamate kinase family. ArgB subfamily.

The protein localises to the cytoplasm. It carries out the reaction N-acetyl-L-glutamate + ATP = N-acetyl-L-glutamyl 5-phosphate + ADP. Its pathway is amino-acid biosynthesis; L-arginine biosynthesis; N(2)-acetyl-L-ornithine from L-glutamate: step 2/4. Functionally, catalyzes the ATP-dependent phosphorylation of N-acetyl-L-glutamate. The protein is Acetylglutamate kinase of Ruegeria pomeroyi (strain ATCC 700808 / DSM 15171 / DSS-3) (Silicibacter pomeroyi).